The primary structure comprises 331 residues: Thiamine-monophosphate kinase (331 aa).

Mg(2+) contacts are provided by Asp-43, Thr-59, Thr-60, and Asp-61. Residue His-68 coordinates substrate. Mg(2+) contacts are provided by Asp-90, Asp-138, and Asp-231. 137–138 provides a ligand contact to ATP; it reads GD. An ATP-binding site is contributed by Ser-233. Residue Asp-234 coordinates Mg(2+). Substrate-binding residues include Glu-284 and Trp-328.

This sequence belongs to the thiamine-monophosphate kinase family.

The catalysed reaction is thiamine phosphate + ATP = thiamine diphosphate + ADP. Its pathway is cofactor biosynthesis; thiamine diphosphate biosynthesis; thiamine diphosphate from thiamine phosphate: step 1/1. Its function is as follows. Catalyzes the ATP-dependent phosphorylation of thiamine-monophosphate (TMP) to form thiamine-pyrophosphate (TPP), the active form of vitamin B1. The protein is Thiamine-monophosphate kinase of Corynebacterium glutamicum (strain ATCC 13032 / DSM 20300 / JCM 1318 / BCRC 11384 / CCUG 27702 / LMG 3730 / NBRC 12168 / NCIMB 10025 / NRRL B-2784 / 534).